The following is a 123-amino-acid chain: Small ribosomal subunit protein uS12 (123 aa).

Residues 1–31 (MPTIQQLVRKGRHSKKAKVATAGLKGSPQRR) are disordered. The span at 9-18 (RKGRHSKKAK) shows a compositional bias: basic residues. A 3-methylthioaspartic acid modification is found at aspartate 89.

It belongs to the universal ribosomal protein uS12 family. As to quaternary structure, part of the 30S ribosomal subunit. Contacts proteins S8 and S17. May interact with IF1 in the 30S initiation complex.

Its function is as follows. With S4 and S5 plays an important role in translational accuracy. Interacts with and stabilizes bases of the 16S rRNA that are involved in tRNA selection in the A site and with the mRNA backbone. Located at the interface of the 30S and 50S subunits, it traverses the body of the 30S subunit contacting proteins on the other side and probably holding the rRNA structure together. The combined cluster of proteins S8, S12 and S17 appears to hold together the shoulder and platform of the 30S subunit. This chain is Small ribosomal subunit protein uS12, found in Corynebacterium aurimucosum (strain ATCC 700975 / DSM 44827 / CIP 107346 / CN-1) (Corynebacterium nigricans).